Reading from the N-terminus, the 883-residue chain is Coatomer subunit gamma (883 aa).

Residues Met1–Gln25 form a disordered region. HEAT repeat units follow at residues Arg69–Asp106, Arg292–Ala329, Val331–Ser364, Ser365–Arg401, Thr404–Asp439, and Ala476–Ala513.

This sequence belongs to the COPG family. As to quaternary structure, oligomeric complex that consists of at least the alpha, beta, beta', gamma, delta, epsilon and zeta subunits. Expressed in ovary, testis, testis tip, young spermatocytes, germ cells and follicle cells. Up-regulated expression within centrally to posteriorly located germarial cysts and in migrating follicle cells. Widespread expression in imaginal disks including eye-antennal disk, wing disk, third leg and haltere disk.

It is found in the cytoplasm. Its subcellular location is the golgi apparatus membrane. The protein localises to the cytoplasmic vesicle. It localises to the COPI-coated vesicle membrane. The protein resides in the endoplasmic reticulum. In terms of biological role, the coatomer is a cytosolic protein complex that binds to dilysine motifs and reversibly associates with Golgi non-clathrin-coated vesicles, which further mediate biosynthetic protein transport from the ER, via the Golgi up to the trans Golgi network. Coatomer complex is required for budding from Golgi membranes, and is essential for the retrograde Golgi-to-ER transport of dilysine-tagged proteins. Required for limiting lipid storage in lipid droplets. Involved in the expansion of luminal extracellular matrices and apical membrane during tubulogenesis. Required in the tracheal epithelium for luminal protein secretion and diametric tube growth. In salivary glands, required for deposition of O-glycans and luminal extracellular matrix assembly. Required for epidermal morphogenesis and cuticle development. The polypeptide is Coatomer subunit gamma (Drosophila melanogaster (Fruit fly)).